The chain runs to 176 residues: Shikimate kinase (176 aa).

12-17 provides a ligand contact to ATP; it reads GSGKST. Ser16 is a binding site for Mg(2+). Asp34, Arg58, and Gly80 together coordinate substrate. Arg117 lines the ATP pocket. Arg136 is a substrate binding site. Arg153 serves as a coordination point for ATP.

This sequence belongs to the shikimate kinase family. As to quaternary structure, monomer. The cofactor is Mg(2+).

The protein localises to the cytoplasm. The enzyme catalyses shikimate + ATP = 3-phosphoshikimate + ADP + H(+). It functions in the pathway metabolic intermediate biosynthesis; chorismate biosynthesis; chorismate from D-erythrose 4-phosphate and phosphoenolpyruvate: step 5/7. Functionally, catalyzes the specific phosphorylation of the 3-hydroxyl group of shikimic acid using ATP as a cosubstrate. This chain is Shikimate kinase, found in Mycobacterium bovis (strain ATCC BAA-935 / AF2122/97).